The primary structure comprises 254 residues: Alcohol dehydrogenase (254 aa).

10–33 (FVAGLGGIGLDTNREIVKSGPKNL) contributes to the NAD(+) binding site. Residue Ser-138 coordinates substrate. The Proton acceptor role is filled by Tyr-151.

Belongs to the short-chain dehydrogenases/reductases (SDR) family. As to quaternary structure, homodimer.

The enzyme catalyses a primary alcohol + NAD(+) = an aldehyde + NADH + H(+). It carries out the reaction a secondary alcohol + NAD(+) = a ketone + NADH + H(+). The protein is Alcohol dehydrogenase (Adh) of Scaptomyza albovittata (Fruit fly).